The chain runs to 541 residues: Cytochrome P450 monooxygenase claW (541 aa).

Residues 12 to 32 traverse the membrane as a helical segment; the sequence is VINALVILFSFWAFLSLIRVI. Cys-480 serves as a coordination point for heme.

It belongs to the cytochrome P450 family. Heme is required as a cofactor.

It localises to the membrane. The protein operates within secondary metabolite biosynthesis; terpenoid biosynthesis. Functionally, cytochrome P450 monooxygenase; part of the gene cluster that mediates the biosynthesis of clavilactone A, a meroterpenoid that features a unique benzo-fused ten-membered carbocyclic ring unit with an alpha,beta-epoxy-gamma-lactone moiety, forming an intriguing 10/5/3 tricyclic nested skeleton. Cytochrome P450 monooxygenases claO, claP, claQ, claU, and claW are close orthologs, suggesting that a redundant function or pseudogenes are present in the cla cluster. These monoxygenases are not involved in clavilactone A biosynthesis nor its modification. ClaR, ClaS and ClaT are sufficient to produce clavilactone A. The biosynthesis begins with the prenyltransferase claS that transfers geranyl pyrophosphate (GPP) to hydroquinone to produces geranylhydroquinone. The cytochrome P450 monooxygenase claR then catalyzes the diradical coupling reaction between the intramolecular hydroquinone and allyl moieties to form the benzo-fused ten-membered carbocyclic ring unit of wigantol. Finally the cytochrome P450 monooxygenase claT exquisitely and stereoselectively assembles the alpha,beta-epoxy-gamma-lactone moiety, producing clavilactone A via arnebinol A. This is Cytochrome P450 monooxygenase claW from Ampulloclitocybe clavipes (Club foot).